The chain runs to 116 residues: Small ribosomal subunit protein uS17 (116 aa).

It belongs to the universal ribosomal protein uS17 family. In terms of assembly, part of the 30S ribosomal subunit.

Its function is as follows. One of the primary rRNA binding proteins, it binds specifically to the 5'-end of 16S ribosomal RNA. This is Small ribosomal subunit protein uS17 from Pyrococcus horikoshii (strain ATCC 700860 / DSM 12428 / JCM 9974 / NBRC 100139 / OT-3).